A 197-amino-acid chain; its full sequence is Chitin synthase 3 (197 aa).

It belongs to the chitin synthase family. Class III subfamily.

It is found in the cell membrane. The enzyme catalyses [(1-&gt;4)-N-acetyl-beta-D-glucosaminyl](n) + UDP-N-acetyl-alpha-D-glucosamine = [(1-&gt;4)-N-acetyl-beta-D-glucosaminyl](n+1) + UDP + H(+). In terms of biological role, polymerizes chitin, a structural polymer of the cell wall and septum, by transferring the sugar moiety of UDP-GlcNAc to the non-reducing end of the growing chitin polymer. This is Chitin synthase 3 (CHS3) from Exophiala jeanselmei (Dematiaceous fungus).